Here is a 346-residue protein sequence, read N- to C-terminus: Heat-inducible transcription repressor HrcA (346 aa).

This sequence belongs to the HrcA family.

Negative regulator of class I heat shock genes (grpE-dnaK-dnaJ and groELS operons). Prevents heat-shock induction of these operons. This is Heat-inducible transcription repressor HrcA from Fructilactobacillus sanfranciscensis (Lactobacillus sanfranciscensis).